Here is a 204-residue protein sequence, read N- to C-terminus: Urease accessory protein UreG (204 aa).

Position 13-20 (13-20 (GPVGSGKT)) interacts with GTP.

Belongs to the SIMIBI class G3E GTPase family. UreG subfamily. In terms of assembly, homodimer. UreD, UreF and UreG form a complex that acts as a GTP-hydrolysis-dependent molecular chaperone, activating the urease apoprotein by helping to assemble the nickel containing metallocenter of UreC. The UreE protein probably delivers the nickel.

It is found in the cytoplasm. Facilitates the functional incorporation of the urease nickel metallocenter. This process requires GTP hydrolysis, probably effectuated by UreG. The polypeptide is Urease accessory protein UreG (Acinetobacter baumannii (strain AB307-0294)).